A 136-amino-acid chain; its full sequence is Interleukin-13 (136 aa).

The first 18 residues, 1–18 (MALWLTVVIAFTCIGGLA), serve as a signal peptide directing secretion. 6 N-linked (GlcNAc...) asparagine glycosylation sites follow: Asn-38, Asn-49, Asn-57, Asn-72, Asn-75, and Asn-131. Intrachain disulfides connect Cys-48–Cys-76 and Cys-64–Cys-90.

This sequence belongs to the IL-4/IL-13 family. Interacts with IL13RA2.

The protein resides in the secreted. Its function is as follows. Cytokine that plays important roles in allergic inflammation and immune response to parasite infection. Synergizes with IL2 in regulating interferon-gamma synthesis. Stimulates B-cell proliferation, and activation of eosinophils, basophils, and mast cells. Plays an important role in controlling IL33 activity by modulating the production of transmembrane and soluble forms of interleukin-1 receptor-like 1/IL1RL1. Displays the capacity to antagonize Th1-driven proinflammatory immune response and downregulates synthesis of many proinflammatory cytokines including IL1, IL6, IL10, IL12 and TNF-alpha through a mechanism that partially involves suppression of NF-kappa-B. Also functions on nonhematopoietic cells, including endothelial cells where it induces vascular cell adhesion protein 1/VCAM1, which is important in the recruitment of eosinophils. Exerts its biological effects through its receptors which comprises the IL4R chain and the IL13RA1 chain, to activate JAK1 and TYK2, leading to the activation of STAT6. Aside from IL13RA1, another receptor IL13RA2 acts as a high affinity decoy for IL13 and mediates internalization and depletion of extracellular IL13. This Camelus bactrianus (Bactrian camel) protein is Interleukin-13 (IL13).